Here is a 103-residue protein sequence, read N- to C-terminus: Alpha-ketoglutarate dehydrogenase component 4 (103 aa).

Position 1 is an N-acetylmethionine (Met-1). Lys-5 is modified (N6-succinyllysine). The tract at residues 20 to 69 is disordered; that stretch reads TPLIRFPDRRDNPKPNVSEALRSAGLPSHSSVISQHSKGSKSPDLLMYQG. Residues 47 to 56 are compositionally biased toward polar residues; it reads SHSSVISQHS. 3 positions are modified to phosphoserine: Ser-49, Ser-61, and Ser-90.

The protein belongs to the alpha-ketoglutarate dehydrogenase component 4 family. As to quaternary structure, component of the 2-oxoglutarate dehydrogenase complex (OGDHC), composed of OGDH (2-oxoglutarate dehydrogenase; also called E1 subunit), DLST (dihydrolipoamide succinyltransferase; also called E2 subunit) and DLD (dihydrolipoamide dehydrogenase; also called E3 subunit), and the assembly factor KGD4. Within OGDHC complex, interacts (via N-terminus) with E3 subunit and (via C-terminus) with E2 subunit.

Its subcellular location is the mitochondrion. Functionally, molecular adapter that is necessary to form a stable 2-oxoglutarate dehydrogenase enzyme complex (OGDHC). Enables the specific recruitment of E3 subunit to E2 subunit in the 2-oxoglutarate dehydrogenase complex (OGDHC). The polypeptide is Alpha-ketoglutarate dehydrogenase component 4 (Homo sapiens (Human)).